We begin with the raw amino-acid sequence, 489 residues long: Potassium voltage-gated channel subfamily A member 7 (489 aa).

The helical transmembrane segment at 176-196 threads the bilayer; that stretch reads VLAVVSVLVILVSIVVFCLET. Asparagine 224 is a glycosylation site (N-linked (GlcNAc...) asparagine). A helical transmembrane segment spans residues 242–262; it reads FFVVETLCICWFSFELLVRLV. Cysteine 264 is lipidated: S-palmitoyl cysteine. The helical transmembrane segment at 274–294 threads the bilayer; it reads VMNLIDFVAILPYFVALGTEL. The chain crosses the membrane as a helical; Voltage-sensor span at residues 309 to 328; that stretch reads ILRVIRLVRVFRIFKLSRHS. The chain crosses the membrane as a helical span at residues 345-365; that stretch reads LGLLIFFLFIGVVLFSSAVYF. Positions 391 to 396 match the Selectivity filter motif; it reads TVGYGD. The chain crosses the membrane as a helical span at residues 406 to 426; sequence IVGSLCAIAGVLTISLPVPVI.

It belongs to the potassium channel family. A (Shaker) (TC 1.A.1.2) subfamily. Kv1.7/KCNA7 sub-subfamily. Heterotetramer of potassium channel proteins. In terms of tissue distribution, detected in heart, skeletal muscle, brain, and pancreatic islet cells.

It localises to the membrane. It catalyses the reaction K(+)(in) = K(+)(out). Its function is as follows. Mediates the voltage-dependent potassium ion permeability of excitable membranes. Assuming opened or closed conformations in response to the voltage difference across the membrane, the protein forms a potassium-selective channel through which potassium ions may pass in accordance with their electrochemical gradient. Channels formed by isoform 1 inactivate faster than channels formed by isoform 2. The polypeptide is Potassium voltage-gated channel subfamily A member 7 (Kcna7) (Mus musculus (Mouse)).